A 119-amino-acid polypeptide reads, in one-letter code: Large ribosomal subunit protein uL24 (119 aa).

It belongs to the universal ribosomal protein uL24 family. Part of the 50S ribosomal subunit.

Its function is as follows. One of two assembly initiator proteins, it binds directly to the 5'-end of the 23S rRNA, where it nucleates assembly of the 50S subunit. In terms of biological role, located at the polypeptide exit tunnel on the outside of the subunit. The chain is Large ribosomal subunit protein uL24 from Methanococcus maripaludis (strain C5 / ATCC BAA-1333).